The chain runs to 419 residues: Phosphatidylcholine:ceramide cholinephosphotransferase 1 (419 aa).

An SAM domain is found at 13–76 (WSPKKVADWL…LDMIETLKME (64 aa)). S14 carries the phosphoserine modification. 5 helical membrane passes run 142-162 (FLAF…ISVV), 190-210 (FSIC…QWLL), 221-241 (FFCI…VTTL), 282-302 (MCGD…YLFI), and 310-330 (LWWY…CILL). The active site involves H291. Residues 331–419 (AHDHYTVDVV…VKYSRLVNDT (89 aa)) lie on the Cytoplasmic side of the membrane. Residues H334 and D338 contribute to the active site.

This sequence belongs to the sphingomyelin synthase family. As to expression, isoform 1 is widely expressed, isoform 2 shows a more narrow distribution and isoform 3 is detected only in testis and heart.

The protein resides in the golgi apparatus membrane. The catalysed reaction is an N-acylsphing-4-enine + a 1,2-diacyl-sn-glycero-3-phosphocholine = a sphingomyelin + a 1,2-diacyl-sn-glycerol. It catalyses the reaction 1-(9Z-octadecenoyl)-2-acyl-sn-3-glycerol + a sphingomyelin = a 1-(9Z-octadecenoyl)-2-acyl-sn-glycero-3-phosphocholine + an N-acylsphing-4-enine. It carries out the reaction N-hexadecanoylsphinganine + a 1,2-diacyl-sn-glycero-3-phosphocholine = N-hexadecanoyl-sphinganine-1-phosphocholine + a 1,2-diacyl-sn-glycerol. The enzyme catalyses N-hexadecanoyl-(4R)-hydroxysphinganine + a 1,2-diacyl-sn-glycero-3-phosphocholine = N-hexadecanoyl-(4R)-hydroxysphinganine-phosphocholine + a 1,2-diacyl-sn-glycerol. The catalysed reaction is an N-acylsphing-4-enine + a 1,2-diacyl-sn-glycero-3-phosphoethanolamine = an N-acylsphing-4-enine 1-phosphoethanolamine + a 1,2-diacyl-sn-glycerol. It functions in the pathway sphingolipid metabolism. Functionally, major sphingomyelin synthase at the Golgi apparatus. Catalyzes the reversible transfer of phosphocholine moiety in sphingomyelin biosynthesis: in the forward reaction transfers phosphocholine head group of phosphatidylcholine (PC) on to ceramide (CER) to form ceramide phosphocholine (sphingomyelin, SM) and diacylglycerol (DAG) as by-product, and in the reverse reaction transfers phosphocholine from SM to DAG to form PC and CER. The direction of the reaction depends on the levels of CER and DAG in Golgi membranes. Converts the newly synthesized CER, that is transported from the endoplasmic reticulum to the trans-Golgi by the Cer transport protein (CERT), to SM. Can form a heteromeric complex with glucosylceramide synthase (GCS) increasing SMS activity and reducing glucosylceramide synthesis, a critical mechanism that controls the metabolic fate of CER in the Golgi. Does not use free phosphorylcholine or CDP-choline as donor. Can also transfer phosphoethanolamine head group of phosphatidylethanolamine (PE) on to CER to form ceramide phosphoethanolamine (CPE). Regulates receptor-mediated signal transduction via mitogenic DAG and proapoptotic CER, as well as via SM, a structural component of membrane rafts that serve as platforms for signal transduction and protein sorting. Plays a role in secretory transport via regulation of DAG pool at the Golgi apparatus and its downstream effects on PRKD1. In terms of biological role, (Microbial infection) Contributes to the brain SM production for Japanese encephalitis virus attachment and infection. This Mus musculus (Mouse) protein is Phosphatidylcholine:ceramide cholinephosphotransferase 1 (Sgms1).